A 509-amino-acid polypeptide reads, in one-letter code: ATP synthase subunit alpha (509 aa).

Residue 169-176 (GDRQTGKT) coordinates ATP.

Belongs to the ATPase alpha/beta chains family. As to quaternary structure, F-type ATPases have 2 components, CF(1) - the catalytic core - and CF(0) - the membrane proton channel. CF(1) has five subunits: alpha(3), beta(3), gamma(1), delta(1), epsilon(1). CF(0) has three main subunits: a(1), b(2) and c(9-12). The alpha and beta chains form an alternating ring which encloses part of the gamma chain. CF(1) is attached to CF(0) by a central stalk formed by the gamma and epsilon chains, while a peripheral stalk is formed by the delta and b chains.

The protein localises to the cell inner membrane. The catalysed reaction is ATP + H2O + 4 H(+)(in) = ADP + phosphate + 5 H(+)(out). Its function is as follows. Produces ATP from ADP in the presence of a proton gradient across the membrane. The alpha chain is a regulatory subunit. The chain is ATP synthase subunit alpha from Brucella canis (strain ATCC 23365 / NCTC 10854 / RM-666).